A 500-amino-acid chain; its full sequence is Probable cytosol aminopeptidase (500 aa).

Residues Lys-268 and Asp-273 each coordinate Mn(2+). Residue Lys-280 is part of the active site. Residues Asp-291, Asp-350, and Glu-352 each contribute to the Mn(2+) site. Arg-354 is a catalytic residue.

It belongs to the peptidase M17 family. It depends on Mn(2+) as a cofactor.

Its subcellular location is the cytoplasm. The catalysed reaction is Release of an N-terminal amino acid, Xaa-|-Yaa-, in which Xaa is preferably Leu, but may be other amino acids including Pro although not Arg or Lys, and Yaa may be Pro. Amino acid amides and methyl esters are also readily hydrolyzed, but rates on arylamides are exceedingly low.. It carries out the reaction Release of an N-terminal amino acid, preferentially leucine, but not glutamic or aspartic acids.. Its function is as follows. Presumably involved in the processing and regular turnover of intracellular proteins. Catalyzes the removal of unsubstituted N-terminal amino acids from various peptides. This is Probable cytosol aminopeptidase from Baumannia cicadellinicola subsp. Homalodisca coagulata.